The sequence spans 181 residues: Large ribosomal subunit protein uL5 (181 aa).

Belongs to the universal ribosomal protein uL5 family. As to quaternary structure, part of the 50S ribosomal subunit; part of the 5S rRNA/L5/L18/L25 subcomplex. Contacts the 5S rRNA and the P site tRNA. Forms a bridge to the 30S subunit in the 70S ribosome.

Functionally, this is one of the proteins that bind and probably mediate the attachment of the 5S RNA into the large ribosomal subunit, where it forms part of the central protuberance. In the 70S ribosome it contacts protein S13 of the 30S subunit (bridge B1b), connecting the 2 subunits; this bridge is implicated in subunit movement. Contacts the P site tRNA; the 5S rRNA and some of its associated proteins might help stabilize positioning of ribosome-bound tRNAs. This chain is Large ribosomal subunit protein uL5, found in Colwellia psychrerythraea (strain 34H / ATCC BAA-681) (Vibrio psychroerythus).